Consider the following 202-residue polypeptide: B-cell CLL/lymphoma 7 protein family member B (202 aa).

Residues 53–202 (DSKEKEKSKS…PVVPQTTSES (150 aa)) are disordered. Over residues 90–99 (ENSNQSSVSD) the composition is skewed to polar residues. Residues 107–123 (SSTNSSPSPQQSESLSP) show a composition bias toward low complexity. Phosphoserine occurs at positions 114, 118, 120, 122, 127, 148, and 152.

This sequence belongs to the BCL7 family.

Its function is as follows. Positive regulator of apoptosis. Plays a role in the Wnt signaling pathway, negatively regulating the expression of Wnt signaling components CTNNB1 and HMGA1. Involved in cell cycle progression, maintenance of the nuclear structure and stem cell differentiation. May play a role in lung tumor development or progression. The protein is B-cell CLL/lymphoma 7 protein family member B (Bcl7b) of Mus musculus (Mouse).